The following is a 48-amino-acid chain: Sperm protamine P1 (48 aa).

Belongs to the protamine P1 family. In terms of tissue distribution, testis.

The protein resides in the nucleus. The protein localises to the chromosome. Its function is as follows. Protamines substitute for histones in the chromatin of sperm during the haploid phase of spermatogenesis. They compact sperm DNA into a highly condensed, stable and inactive complex. The sequence is that of Sperm protamine P1 (PRM1) from Murina cyclotis (Round-eared tube-nosed bat).